The chain runs to 389 residues: ELAV-like protein 2 (389 aa).

3 RRM domains span residues 66 to 145, 153 to 233, and 306 to 384; these read TNLI…YARP, ANLY…FANN, and WCIF…FKTS.

The protein belongs to the RRM elav family. As to quaternary structure, part of a ribonucleoprotein (RNP) complex, at least composed of elavl1/elrA and/or elavl2/elrB, igf2bp3/vg1RBP, ddx6/Xp54, ybx2/frgy2, lsm14b/rap55b and, in a subset of RNP complexes, stau1/staufen. Binds RNA as a homooligomer. In terms of tissue distribution, expressed in brain, testis and ovary. Ovarian expression is restricted to follicle cells surrounding the oocyte. From the early tailbud stage, expression is neural-specific and is seen in both the central and peripheral nervous system in differentiating neurons but not proliferating precursors. Expressed in the retina from stage 32 with expression becoming restricted to the ganglion cell layer by later stages.

Its subcellular location is the cytoplasm. It localises to the cell cortex. Its function is as follows. Binds to poly-U elements and AU-rich elements (AREs) in the 3'-UTR of target mRNAs. Required for the vegetal localization of vg1 mRNA. Probably required for nervous system development. The protein is ELAV-like protein 2 (elavl2) of Xenopus laevis (African clawed frog).